The primary structure comprises 151 residues: Mini-ribonuclease 3 (151 aa).

Asp28 is an active-site residue.

Belongs to the MrnC RNase family. Homodimer. Mg(2+) serves as cofactor.

It is found in the cytoplasm. Involved in correct processing of both the 5' and 3' ends of 23S rRNA precursor. Processes 30S rRNA precursor transcript even in absence of ribonuclease 3 (Rnc); Rnc processes 30S rRNA into smaller rRNA precursors. This is Mini-ribonuclease 3 from Clostridium tetani (strain Massachusetts / E88).